We begin with the raw amino-acid sequence, 223 residues long: Deoxyribose-phosphate aldolase (223 aa).

Asp92 serves as the catalytic Proton donor/acceptor. Lys154 acts as the Schiff-base intermediate with acetaldehyde in catalysis. Lys182 functions as the Proton donor/acceptor in the catalytic mechanism.

The protein belongs to the DeoC/FbaB aldolase family. DeoC type 1 subfamily.

The protein localises to the cytoplasm. The catalysed reaction is 2-deoxy-D-ribose 5-phosphate = D-glyceraldehyde 3-phosphate + acetaldehyde. The protein operates within carbohydrate degradation; 2-deoxy-D-ribose 1-phosphate degradation; D-glyceraldehyde 3-phosphate and acetaldehyde from 2-deoxy-alpha-D-ribose 1-phosphate: step 2/2. In terms of biological role, catalyzes a reversible aldol reaction between acetaldehyde and D-glyceraldehyde 3-phosphate to generate 2-deoxy-D-ribose 5-phosphate. The sequence is that of Deoxyribose-phosphate aldolase from Haemophilus influenzae (strain ATCC 51907 / DSM 11121 / KW20 / Rd).